The chain runs to 589 residues: Deoxynucleoside triphosphate triphosphohydrolase SAMHD1 (589 aa).

Met1 is subject to N-acetylmethionine. Positions 1–10 (MQSADSQNTP) are enriched in polar residues. The interval 1 to 41 (MQSADSQNTPKRPRRDGSPRTPPDSPLADAETSPSHDLDPD) is disordered. The residue at position 18 (Ser18) is a Phosphoserine. Thr21 is subject to Phosphothreonine. Residues Ser33 and Ser88 each carry the phosphoserine modification. The SAM domain occupies 45-100 (WGPEQVWSFLRRCGFSDSELLKRCREKRMSGSLLPFPEDLGISSHGKKMKLLNCIQ). GTP-binding residues include Lys104 and Val105. Asn107 serves as a coordination point for dGTP. GTP-binding residues include Asp125, Gln130, and Arg133. Positions 137, 138, 144, and 152 each coordinate dGTP. Gln137 lines the dATP pocket. Gln137 is a binding site for dCTP. Gln137 is a dTTP binding site. Residue Arg152 coordinates dATP. A dCTP-binding site is contributed by Arg152. Residue Arg152 coordinates dTTP. The 126-residue stretch at 152 to 277 (RFEHSLGVGY…IKDASKWLYK (126 aa)) folds into the HD domain. Residues His155, His194, and Asp195 each contribute to the Mn(2+) site. 2 residues coordinate dATP: His198 and His203. DCTP-binding residues include His198 and His203. Residues His198 and His203 each coordinate dTTP. His221 is a catalytic residue. Asp300 is a binding site for Mn(2+). 12 residues coordinate dGTP: Lys301, Tyr304, Asp308, Arg322, Arg341, Lys343, Asn347, Arg355, Tyr363, Gln364, His365, and Lys366. The dATP site is built by Lys301, Tyr304, and Asp308. DCTP-binding residues include Lys301, Tyr304, and Asp308. Lys301, Tyr304, and Asp308 together coordinate dTTP. Residue Arg355 coordinates dATP. Arg355 serves as a coordination point for dCTP. Residue Gln364 coordinates dATP. Gln364 is a binding site for dCTP. Gln364 serves as a coordination point for dTTP. 2 residues coordinate GTP: Arg440 and Lys444. A Glycyl lysine isopeptide (Lys-Gly) (interchain with G-Cter in SUMO2) cross-link involves residue Lys457. Residue Lys512 coordinates GTP. Lys512 provides a ligand contact to dGTP.

The protein belongs to the SAMHD1 family. Homodimer; in absence of GTP and dNTP. Homotetramer; in GTP- and dNTP-bound form. Interacts with MRE11; leading to stimulate the exonuclease activity of MRE11. Interacts with RBBP8/CtIP. Interacts (via its C-terminus) with CD81. The cofactor is Zn(2+).

The protein localises to the nucleus. Its subcellular location is the chromosome. It catalyses the reaction a 2'-deoxyribonucleoside 5'-triphosphate + H2O = a 2'-deoxyribonucleoside + triphosphate + H(+). The catalysed reaction is dATP + H2O = 2'-deoxyadenosine + triphosphate + H(+). It carries out the reaction dCTP + H2O = 2'-deoxycytidine + triphosphate + H(+). The enzyme catalyses dGTP + H2O = 2'-deoxyguanosine + triphosphate + H(+). It catalyses the reaction dTTP + H2O = thymidine + triphosphate + H(+). With respect to regulation, allosterically activated and regulated via the combined actions of GTP and dNTPs (dATP, dGTP, dTTP and dCTP): Allosteric site 1 binds GTP, while allosteric site 2 binds dNTP. Allosteric activation promotes the formation of highly active homotetramers. In terms of biological role, protein that acts both as a host restriction factor involved in defense response to virus and as a regulator of DNA end resection at stalled replication forks. Has deoxynucleoside triphosphate (dNTPase) activity, which is required to restrict infection by viruses: dNTPase activity reduces cellular dNTP levels to levels too low for retroviral reverse transcription to occur, blocking early-stage virus replication in dendritic and other myeloid cells. Likewise, suppresses LINE-1 retrotransposon activity. In addition to virus restriction, dNTPase activity acts as a regulator of DNA precursor pools by regulating dNTP pools. Functions during S phase at stalled DNA replication forks to promote the resection of gapped or reversed forks: acts by stimulating the exonuclease activity of MRE11, activating the ATR-CHK1 pathway and allowing the forks to restart replication. Its ability to promote degradation of nascent DNA at stalled replication forks is required to prevent induction of type I interferons, thereby preventing chronic inflammation. Ability to promote DNA end resection at stalled replication forks is independent of dNTPase activity. Enhances immunoglobulin hypermutation in B-lymphocytes by promoting transversion mutation. This chain is Deoxynucleoside triphosphate triphosphohydrolase SAMHD1, found in Bos taurus (Bovine).